The following is a 156-amino-acid chain: Small ribosomal subunit protein uS7 (156 aa).

The protein belongs to the universal ribosomal protein uS7 family. As to quaternary structure, part of the 30S ribosomal subunit. Contacts proteins S9 and S11.

One of the primary rRNA binding proteins, it binds directly to 16S rRNA where it nucleates assembly of the head domain of the 30S subunit. Is located at the subunit interface close to the decoding center, probably blocks exit of the E-site tRNA. The sequence is that of Small ribosomal subunit protein uS7 from Azotobacter vinelandii (strain DJ / ATCC BAA-1303).